Reading from the N-terminus, the 358-residue chain is Probable dual-specificity RNA methyltransferase RlmN 2 (358 aa).

Catalysis depends on glutamate 90, which acts as the Proton acceptor. The 233-residue stretch at 96-328 (SGIRRTVCVS…VNTCRYTKGD (233 aa)) folds into the Radical SAM core domain. Cysteine 103 and cysteine 334 are disulfide-bonded. 3 residues coordinate [4Fe-4S] cluster: cysteine 110, cysteine 114, and cysteine 117. Residues 160-161 (GE), serine 192, 215-217 (SLH), and asparagine 291 contribute to the S-adenosyl-L-methionine site. Residue cysteine 334 is the S-methylcysteine intermediate of the active site.

This sequence belongs to the radical SAM superfamily. RlmN family. Requires [4Fe-4S] cluster as cofactor.

The protein localises to the cytoplasm. The catalysed reaction is adenosine(2503) in 23S rRNA + 2 reduced [2Fe-2S]-[ferredoxin] + 2 S-adenosyl-L-methionine = 2-methyladenosine(2503) in 23S rRNA + 5'-deoxyadenosine + L-methionine + 2 oxidized [2Fe-2S]-[ferredoxin] + S-adenosyl-L-homocysteine. The enzyme catalyses adenosine(37) in tRNA + 2 reduced [2Fe-2S]-[ferredoxin] + 2 S-adenosyl-L-methionine = 2-methyladenosine(37) in tRNA + 5'-deoxyadenosine + L-methionine + 2 oxidized [2Fe-2S]-[ferredoxin] + S-adenosyl-L-homocysteine. In terms of biological role, specifically methylates position 2 of adenine 2503 in 23S rRNA and position 2 of adenine 37 in tRNAs. The chain is Probable dual-specificity RNA methyltransferase RlmN 2 from Protochlamydia amoebophila (strain UWE25).